Reading from the N-terminus, the 388-residue chain is Probable peptidoglycan glycosyltransferase FtsW (388 aa).

Residues 1 to 19 (MSAAAPKPRPAHRFHIDQT) lie on the Cytoplasmic side of the membrane. A helical transmembrane segment spans residues 20–40 (LLSVCLCLLGIGFVMVASSSM). Residues 41–57 (HLGVKMADDVSYYPFKQ) are Periplasmic-facing. Residues 58 to 78 (LVHIILGLMFAAAILAIPMKY) form a helical membrane-spanning segment. At 79-85 (WQKIGQP) the chain is on the cytoplasmic side. A helical membrane pass occupies residues 86–106 (LFIVGLVLLLVVLIPGVGVKV). Residues 107 to 117 (NGSTRWLSLLG) lie on the Periplasmic side of the membrane. The chain crosses the membrane as a helical span at residues 118–137 (LRIQVSEVMKFISVVYMAGY). The Cytoplasmic portion of the chain corresponds to 138–147 (ITRHSDHVRH). A helical transmembrane segment spans residues 148–168 (SIFGLLRPLMLLSVASILLLL). Residues 169–170 (EP) lie on the Periplasmic side of the membrane. Residues 171-191 (DFGSAVVILIIAMGMMFLGGA) form a helical membrane-spanning segment. Position 192 (Arg-192) is a topological domain, cytoplasmic. Residues 193 to 213 (LSPFVALVALISSAGAILASS) form a helical membrane-spanning segment. Topologically, residues 214–271 (ADYRVKRMTSFLNPWEHARDSGYQLTQALISFGRGEVSGVGLGNGLQKLFYLPEAHTD) are periplasmic. The helical transmembrane segment at 272 to 292 (FLFSVLGEELGLVGVTLVIAL) threads the bilayer. The Cytoplasmic portion of the chain corresponds to 293-315 (FTTLVVRGFSIGEQAEAAGERFS). The helical transmembrane segment at 316 to 336 (ALVAYGLVIWFGFQAFVNMGV) threads the bilayer. The Periplasmic portion of the chain corresponds to 337–348 (NMGILPTKGLTL). A helical membrane pass occupies residues 349–369 (PLMSYGGGSMIVMCGAMAVLF). The Cytoplasmic portion of the chain corresponds to 370–388 (RIHYEVTELHKSNIKGKSR).

This sequence belongs to the SEDS family. FtsW subfamily.

It localises to the cell inner membrane. The catalysed reaction is [GlcNAc-(1-&gt;4)-Mur2Ac(oyl-L-Ala-gamma-D-Glu-L-Lys-D-Ala-D-Ala)](n)-di-trans,octa-cis-undecaprenyl diphosphate + beta-D-GlcNAc-(1-&gt;4)-Mur2Ac(oyl-L-Ala-gamma-D-Glu-L-Lys-D-Ala-D-Ala)-di-trans,octa-cis-undecaprenyl diphosphate = [GlcNAc-(1-&gt;4)-Mur2Ac(oyl-L-Ala-gamma-D-Glu-L-Lys-D-Ala-D-Ala)](n+1)-di-trans,octa-cis-undecaprenyl diphosphate + di-trans,octa-cis-undecaprenyl diphosphate + H(+). The protein operates within cell wall biogenesis; peptidoglycan biosynthesis. Functionally, peptidoglycan polymerase that is essential for cell division. This chain is Probable peptidoglycan glycosyltransferase FtsW, found in Methylomonas methanica (strain DSM 25384 / MC09).